We begin with the raw amino-acid sequence, 308 residues long: Palmitoyltransferase ZDHHC7 (308 aa).

The Cytoplasmic segment spans residues 1 to 50 (MQPSGHRLRDIEHHPLLTDNDNYDSASSSSSETDMADRVWFIRDGCGMVC). Residues 51-71 (AVMTWLLVVYADFVVTFVMLL) traverse the membrane as a helical segment. Topologically, residues 72–75 (PSKD) are lumenal. Residues 76-96 (FWYSVVNGVLFNCLAVLALSS) traverse the membrane as a helical segment. Residues 97–173 (HLRTMLTDPG…NNCVGEKNQR (77 aa)) are Cytoplasmic-facing. Positions 130–180 (YKCPKCCCIKPERAHHCSICKRCIRKMDHHCPWVNNCVGEKNQRFFVLFTM) constitute a DHHC domain. Cys-160 (S-palmitoyl cysteine intermediate) is an active-site residue. Residues 174 to 194 (FFVLFTMYIALSSVHALILCG) form a helical membrane-spanning segment. The Lumenal portion of the chain corresponds to 195–217 (LQFISCVRGQWTECSDFSPPITV). The helical transmembrane segment at 218-238 (ILLVFLCLEGLLFFTFTAVMF) threads the bilayer. The Cytoplasmic portion of the chain corresponds to 239–308 (GTQIHSICND…TRKGGPEFSV (70 aa)).

This sequence belongs to the DHHC palmitoyltransferase family. Homooligomers. Heterooligomers with ZDHHC3. Post-translationally, autopalmitoylated. As to expression, ubiquitously expressed, with highest levels in liver, kidney and brain. Expressed in all brain regions.

It localises to the golgi apparatus membrane. It carries out the reaction L-cysteinyl-[protein] + hexadecanoyl-CoA = S-hexadecanoyl-L-cysteinyl-[protein] + CoA. The enzyme catalyses L-cysteinyl-[protein] + tetradecanoyl-CoA = S-tetradecanoyl-L-cysteinyl-[protein] + CoA. It catalyses the reaction L-cysteinyl-[protein] + octadecanoyl-CoA = S-octadecanoyl-L-cysteinyl-[protein] + CoA. Golgi-localized palmitoyltransferase that catalyzes the addition of palmitate onto various protein substrates and therefore functions in several unrelated biological processes. Has no stringent fatty acid selectivity and in addition to palmitate can also transfer onto target proteins myristate from tetradecanoyl-CoA and stearate from octadecanoyl-CoA. Palmitoylates sex steroid hormone receptors, including ESR1, PGR and AR, thereby regulating their targeting to the plasma membrane and their function in rapid intracellular signaling upon binding of sex hormones. Palmitoylates GNAQ, a heterotrimeric G protein, regulating its dynamic localization at the plasma membrane and is thereby involved in GNAQ-dependent G protein-coupled receptor signaling pathways. Also functions in ligand-induced cell death by regulating the FAS signaling pathway through the palmitoylation and stabilization of the receptor at the plasma membrane. In epithelial cells, palmitoylates SCRIB and regulates its localization to the plasma membrane, regulating indirectly cell polarity and differentiation. Also palmitoylates JAM3 and promotes its expression at tight junctions and regulates its function in cell migration. Palmitoylates the glucose transporter GLUT4/SLC2A4 and controls the insulin-dependent translocation of GLUT4 to the plasma membrane. In brain, could also palmitoylate SNAP25 and DLG4/PSD95. Could also palmitoylate DNAJC5 and regulate its localization to the Golgi membrane. Could also palmitoylate NCDN. May play a role in follicle stimulation hormone (FSH) activation of testicular Sertoli cells. Activates pyroptosis by catalyzing palmitoylation of gasdermin-D (GSDMD). The chain is Palmitoyltransferase ZDHHC7 from Mus musculus (Mouse).